A 273-amino-acid polypeptide reads, in one-letter code: 4-hydroxy-tetrahydrodipicolinate reductase (273 aa).

NAD(+) is bound by residues 12–17 (GAGGRM) and E38. Residue R39 coordinates NADP(+). Residues 102 to 104 (GTT) and 126 to 129 (AANF) contribute to the NAD(+) site. H159 acts as the Proton donor/acceptor in catalysis. (S)-2,3,4,5-tetrahydrodipicolinate is bound at residue H160. K163 (proton donor) is an active-site residue. Residue 169–170 (GT) coordinates (S)-2,3,4,5-tetrahydrodipicolinate.

The protein belongs to the DapB family. As to quaternary structure, homotetramer.

The protein resides in the cytoplasm. It catalyses the reaction (S)-2,3,4,5-tetrahydrodipicolinate + NAD(+) + H2O = (2S,4S)-4-hydroxy-2,3,4,5-tetrahydrodipicolinate + NADH + H(+). The enzyme catalyses (S)-2,3,4,5-tetrahydrodipicolinate + NADP(+) + H2O = (2S,4S)-4-hydroxy-2,3,4,5-tetrahydrodipicolinate + NADPH + H(+). It participates in amino-acid biosynthesis; L-lysine biosynthesis via DAP pathway; (S)-tetrahydrodipicolinate from L-aspartate: step 4/4. In terms of biological role, catalyzes the conversion of 4-hydroxy-tetrahydrodipicolinate (HTPA) to tetrahydrodipicolinate. This is 4-hydroxy-tetrahydrodipicolinate reductase from Yersinia pseudotuberculosis serotype O:1b (strain IP 31758).